The primary structure comprises 647 residues: DNA ligase (647 aa).

NAD(+)-binding positions include 30-34 (DEEYD), 79-80 (SM), and glutamate 105. Lysine 107 (N6-AMP-lysine intermediate) is an active-site residue. Residues arginine 128, glutamate 162, and lysine 301 each contribute to the NAD(+) site. The Zn(2+) site is built by cysteine 395, cysteine 398, cysteine 411, and cysteine 416. Residues 570–647 (KSDGVIFGKT…ESAFNELVKE (78 aa)) form the BRCT domain.

The protein belongs to the NAD-dependent DNA ligase family. LigA subfamily. It depends on Mg(2+) as a cofactor. Mn(2+) is required as a cofactor.

The catalysed reaction is NAD(+) + (deoxyribonucleotide)n-3'-hydroxyl + 5'-phospho-(deoxyribonucleotide)m = (deoxyribonucleotide)n+m + AMP + beta-nicotinamide D-nucleotide.. DNA ligase that catalyzes the formation of phosphodiester linkages between 5'-phosphoryl and 3'-hydroxyl groups in double-stranded DNA using NAD as a coenzyme and as the energy source for the reaction. It is essential for DNA replication and repair of damaged DNA. In Campylobacter jejuni (strain RM1221), this protein is DNA ligase.